Here is a 329-residue protein sequence, read N- to C-terminus: Phosphate acyltransferase (329 aa).

The protein belongs to the PlsX family. In terms of assembly, homodimer. Probably interacts with PlsY.

It localises to the cytoplasm. The catalysed reaction is a fatty acyl-[ACP] + phosphate = an acyl phosphate + holo-[ACP]. It participates in lipid metabolism; phospholipid metabolism. Catalyzes the reversible formation of acyl-phosphate (acyl-PO(4)) from acyl-[acyl-carrier-protein] (acyl-ACP). This enzyme utilizes acyl-ACP as fatty acyl donor, but not acyl-CoA. The chain is Phosphate acyltransferase from Campylobacter lari (strain RM2100 / D67 / ATCC BAA-1060).